A 155-amino-acid polypeptide reads, in one-letter code: DNA gyrase inhibitor (155 aa).

It belongs to the DNA gyrase inhibitor family. In terms of assembly, interacts with DNA gyrase.

Its subcellular location is the cytoplasm. Functionally, inhibits the supercoiling activity of DNA gyrase. Acts by inhibiting DNA gyrase at an early step, prior to (or at the step of) binding of DNA by the gyrase. It protects cells against toxins that target DNA gyrase, by inhibiting activity of these toxins and reducing the formation of lethal double-strand breaks in the cell. The protein is DNA gyrase inhibitor of Salmonella arizonae (strain ATCC BAA-731 / CDC346-86 / RSK2980).